The chain runs to 316 residues: tRNA pseudouridine synthase B (316 aa).

Residue aspartate 47 is the Nucleophile of the active site.

Belongs to the pseudouridine synthase TruB family. Type 1 subfamily.

It carries out the reaction uridine(55) in tRNA = pseudouridine(55) in tRNA. Responsible for synthesis of pseudouridine from uracil-55 in the psi GC loop of transfer RNAs. The chain is tRNA pseudouridine synthase B from Aliivibrio fischeri (strain MJ11) (Vibrio fischeri).